The following is a 227-amino-acid chain: Ferritin light chain (227 aa).

Positions 1-19 are cleaved as a signal peptide; that stretch reads MKFFVALALFACLGSLALA. The cysteines at positions 25 and 44 are disulfide-linked. One can recognise a Ferritin-like diiron domain in the interval 48 to 208; sequence FAGIDHIEPE…GYANDLAKLM (161 aa).

Belongs to the ferritin family. Oligomer of 12 light (L) chains and 12 heavy (H) chains; L and H chains are disulfide-linked. The functional molecule forms a roughly spherical shell with a diameter of 12 nm and contains a central cavity into which the insoluble ferric iron core is deposited. Expressed in hemolymph, gut, ovaries and to a lesser extent in testes (at protein level). Expressed in the head (at protein level).

The protein localises to the golgi apparatus. It is found in the secreted. Its function is as follows. Stores iron in a soluble, non-toxic, readily available form. Important for iron homeostasis. Iron is taken up in the ferrous form and deposited as ferric hydroxides after oxidation. Ferritin is composed of a heavy (H) chain which is responsible for the oxidation and uptake of ferrous iron, and a light (L) chain which facilitates the nucleation of the ferrihydrite iron core. Required for dietary iron absorption in the midgut. Involved in tissue iron detoxification by exporting excess iron. Plays a role in the maintenance of circadian rhythms. Required for embryo and larval development. The chain is Ferritin light chain from Drosophila melanogaster (Fruit fly).